The chain runs to 510 residues: Ribonuclease Y (510 aa).

The chain crosses the membrane as a helical span at residues 4 to 24 (LLWAVVALLAGLAGGAGIGVY). The 61-residue stretch at 200–260 (TVSTVNLPSE…VRREVARVAL (61 aa)) folds into the KH domain. Residues 326–419 (VLQHSLECAL…VIAADAISGA (94 aa)) form the HD domain.

Belongs to the RNase Y family.

It localises to the cell membrane. Endoribonuclease that initiates mRNA decay. The chain is Ribonuclease Y from Chloroflexus aurantiacus (strain ATCC 29366 / DSM 635 / J-10-fl).